Here is a 205-residue protein sequence, read N- to C-terminus: MTLELLQAQAQNCTACRLMEGRTRVVFGEGNPDAKLMIVGEGPGEEEDKTGRPFVGKAGQLLNRILEAAGIPREEVYITNIVKCRPPQNRAPLPDEAKICTDKWLLKQIELIAPQIIVPLGAVAAEFFLGEKVSITKVRGKWYEWHGIKVFPMFHPAYLLRNPSRAPGSPKHLTWLDIQEVKRALDALPPKERRPVKAVSQEPLF.

Positions 13 and 16 each coordinate [4Fe-4S] cluster. Uracil contacts are provided by residues 40-42 (GEG), Phe54, and Asn80. 2 residues coordinate [4Fe-4S] cluster: Cys84 and Cys100. Position 155 (His155) interacts with uracil.

Belongs to the uracil-DNA glycosylase (UDG) superfamily. Type 4 (UDGa) family. In terms of assembly, monomer.

The catalysed reaction is Hydrolyzes single-stranded DNA or mismatched double-stranded DNA and polynucleotides, releasing free uracil.. With respect to regulation, product-inhibited by apurinic/apyrimidinic sites. Removes uracil bases that are present in DNA as a result of either deamination of cytosine or misincorporation of dUMP instead of dTMP. Can remove uracil from double-stranded DNA containing either a U/G, U/A, U/C or U/T base pair as well as from single-stranded DNA. Specifically recognizes uracil that is flipped out from double-stranded DNA. The polypeptide is Type-4 uracil-DNA glycosylase (Thermus thermophilus (strain ATCC 27634 / DSM 579 / HB8)).